The following is a 490-amino-acid chain: Probable cytosol aminopeptidase (490 aa).

Lys256 and Asp261 together coordinate Mn(2+). Lys268 is an active-site residue. Mn(2+) is bound by residues Asp280, Asp340, and Glu342. Arg344 is a catalytic residue.

This sequence belongs to the peptidase M17 family. Requires Mn(2+) as cofactor.

The protein localises to the cytoplasm. It catalyses the reaction Release of an N-terminal amino acid, Xaa-|-Yaa-, in which Xaa is preferably Leu, but may be other amino acids including Pro although not Arg or Lys, and Yaa may be Pro. Amino acid amides and methyl esters are also readily hydrolyzed, but rates on arylamides are exceedingly low.. The enzyme catalyses Release of an N-terminal amino acid, preferentially leucine, but not glutamic or aspartic acids.. In terms of biological role, presumably involved in the processing and regular turnover of intracellular proteins. Catalyzes the removal of unsubstituted N-terminal amino acids from various peptides. The chain is Probable cytosol aminopeptidase from Synechococcus sp. (strain CC9902).